Here is a 180-residue protein sequence, read N- to C-terminus: Large ribosomal subunit protein uL22 (180 aa).

The segment at 111–180 (VVVESRPAKD…ETSDAKGGSD (70 aa)) is disordered. Residues 142 to 166 (PAKKAPAKKAPAKKAPAKTAAKKTP) show a composition bias toward basic residues. Positions 171 to 180 (ETSDAKGGSD) are enriched in basic and acidic residues.

Belongs to the universal ribosomal protein uL22 family. In terms of assembly, part of the 50S ribosomal subunit.

Its function is as follows. This protein binds specifically to 23S rRNA; its binding is stimulated by other ribosomal proteins, e.g. L4, L17, and L20. It is important during the early stages of 50S assembly. It makes multiple contacts with different domains of the 23S rRNA in the assembled 50S subunit and ribosome. Functionally, the globular domain of the protein is located near the polypeptide exit tunnel on the outside of the subunit, while an extended beta-hairpin is found that lines the wall of the exit tunnel in the center of the 70S ribosome. This Mycobacterium avium (strain 104) protein is Large ribosomal subunit protein uL22.